The following is a 119-amino-acid chain: Membrane-anchored ubiquitin-fold protein 6 (119 aa).

The Ubiquitin-like domain occupies 8–76 (IELKFRLADG…NNRTLAESRL (69 aa)). A lipid anchor (S-palmitoyl cysteine) is attached at cysteine 114. Cysteine 116 bears the Cysteine methyl ester mark. Cysteine 116 carries the S-geranylgeranyl cysteine lipid modification. Positions 117 to 119 (TIL) are cleaved as a propeptide — removed in mature form.

As to expression, ubiquitous.

It localises to the cell membrane. In terms of biological role, may serve as docking site to facilitate the association of other proteins to the plasma membrane. The protein is Membrane-anchored ubiquitin-fold protein 6 (MUB6) of Arabidopsis thaliana (Mouse-ear cress).